We begin with the raw amino-acid sequence, 589 residues long: Probable galacturonosyltransferase 6 (589 aa).

The Cytoplasmic portion of the chain corresponds to M1–R6. The helical; Signal-anchor for type II membrane protein transmembrane segment at W7–V27 threads the bilayer. The Lumenal segment spans residues S28–A589. N-linked (GlcNAc...) asparagine glycosylation is found at N83 and N126. A disordered region spans residues K127–V151. Positions K136 to V151 are enriched in basic and acidic residues. 2 N-linked (GlcNAc...) asparagine glycosylation sites follow: N317 and N454.

The protein belongs to the glycosyltransferase 8 family. Expressed in roots, inflorescences, siliques, leaves and stems.

The protein localises to the golgi apparatus membrane. The protein operates within glycan metabolism; pectin biosynthesis. Its function is as follows. Probably involved in pectin biosynthesis in cell walls. The polypeptide is Probable galacturonosyltransferase 6 (GAUT6) (Arabidopsis thaliana (Mouse-ear cress)).